A 241-amino-acid polypeptide reads, in one-letter code: Proteasome subunit alpha (241 aa).

This sequence belongs to the peptidase T1A family. The 20S proteasome core is composed of 14 alpha and 14 beta subunits that assemble into four stacked heptameric rings, resulting in a barrel-shaped structure. The two inner rings, each composed of seven catalytic beta subunits, are sandwiched by two outer rings, each composed of seven alpha subunits. The catalytic chamber with the active sites is on the inside of the barrel. Has a gated structure, the ends of the cylinder being occluded by the N-termini of the alpha-subunits. Is capped by the proteasome-associated ATPase, ARC.

Its subcellular location is the cytoplasm. It participates in protein degradation; proteasomal Pup-dependent pathway. The formation of the proteasomal ATPase ARC-20S proteasome complex, likely via the docking of the C-termini of ARC into the intersubunit pockets in the alpha-rings, may trigger opening of the gate for substrate entry. Interconversion between the open-gate and close-gate conformations leads to a dynamic regulation of the 20S proteasome proteolysis activity. Component of the proteasome core, a large protease complex with broad specificity involved in protein degradation. This chain is Proteasome subunit alpha, found in Frankia alni (strain DSM 45986 / CECT 9034 / ACN14a).